Here is a 133-residue protein sequence, read N- to C-terminus: MNRRVARLRAVQTLYQLTLIDINVDKAIENTLNDEEEPSEFYNTLVHGTLEHQDEIDGYLSENLKGYTLDRLGHVDRAIARMGLFEMLYLDDIPVNVTLNEAIELAKAFGGTDAGRFINGVLSNSYDMAMKNK.

Belongs to the NusB family.

In terms of biological role, involved in transcription antitermination. Required for transcription of ribosomal RNA (rRNA) genes. Binds specifically to the boxA antiterminator sequence of the ribosomal RNA (rrn) operons. The sequence is that of Transcription antitermination protein NusB from Shouchella clausii (strain KSM-K16) (Alkalihalobacillus clausii).